We begin with the raw amino-acid sequence, 561 residues long: MLLEQQKQLISLIQAAVAQCLPEAQAQVQLERPKVAAHGDIATNVAMQLAKPARRNPRELAQGIVDALMAQPQARELIQDAEIAGPGFINFRLTPAARQAVVQAVASQADAYGRAPRNGEKVLVEFVSANPTGPLHVGHARQAALGDAICRLYDASGWDVTREFYYNDAGNQIDNLAISVQARGRGIAPDAPDYPADGYKGDYIVEIARDFAARKSVQASDGQPVTATGDLDSLDDIRAFAVAYLRREQDLDLQAFGLAFDNYFLESSLYASGRVQETVDTLVAKGHTYEEGGALWLRTTELGTGDDKDRVMRKSEGGYTYFVPDVAYHKVKWERGFHHAVNIQGSDHHGTVARVRAGLQGLEAGIPKDFPAYVLHKMVKVMRGGEEVKISKRAGSYVTMRDLIDWVGRDAVRYFLIQRRADTEFVFDIDLALSKSDENPVYYIQYAHARICTMIGNSGASAAEIAQADTALLTAPSEYALLQRLAEFPQVVALAAQELAPHHVAFWLRDCASDFHAWYNAERVLVDEPALKLARLRLAATTRQVLANGLALLGVSAPDRM.

The short motif at 129–139 (ANPTGPLHVGH) is the 'HIGH' region element.

This sequence belongs to the class-I aminoacyl-tRNA synthetase family. As to quaternary structure, monomer.

The protein resides in the cytoplasm. It catalyses the reaction tRNA(Arg) + L-arginine + ATP = L-arginyl-tRNA(Arg) + AMP + diphosphate. The polypeptide is Arginine--tRNA ligase (Bordetella bronchiseptica (strain ATCC BAA-588 / NCTC 13252 / RB50) (Alcaligenes bronchisepticus)).